A 183-amino-acid chain; its full sequence is Ribosome maturation factor RimP (183 aa).

This sequence belongs to the RimP family.

The protein localises to the cytoplasm. Its function is as follows. Required for maturation of 30S ribosomal subunits. This is Ribosome maturation factor RimP from Mycobacterium bovis (strain ATCC BAA-935 / AF2122/97).